Reading from the N-terminus, the 164-residue chain is UPF0304 protein PC1_2778 (164 aa).

Belongs to the UPF0304 family.

The chain is UPF0304 protein PC1_2778 from Pectobacterium carotovorum subsp. carotovorum (strain PC1).